The following is a 1118-amino-acid chain: Constitutive coactivator of PPAR-gamma-like protein 1 (1118 aa).

The tract at residues 339–405 (PPHYLAARPG…SLSEPAPLTL (67 aa)) is interaction with YES1, SRC and FYN. Residues 374–533 (AKPVAPQVPS…GTVQPIPCLL (160 aa)) form a disordered region. The span at 376–396 (PVAPQVPSPGGAPGQGPYPYS) shows a compositional bias: low complexity. Polar residues-rich tracts occupy residues 405 to 420 (LDTS…SYSN) and 435 to 447 (SPIN…SPNH). The span at 481–502 (GWEKTGSHSEPQARGDPGDQTK) shows a compositional bias: basic and acidic residues. A compositionally biased stretch (polar residues) spans 503–514 (AEGSSTASSGSQ). At threonine 655 the chain carries Phosphothreonine. Residues 829-1118 (ADQAAKVEKM…LEAAVLNKEE (290 aa)) form an RNA binding region. Residues arginine 873, arginine 884, and arginine 886 each carry the omega-N-methylarginine modification. A disordered region spans residues 921–945 (AFSGSDSSRTSKSQGGVQPIPSQGG). Residues 924–936 (GSDSSRTSKSQGG) show a composition bias toward polar residues. Position 932 is an N6-acetyllysine (lysine 932). Serine 960 carries the post-translational modification Phosphoserine. Omega-N-methylarginine is present on residues arginine 982 and arginine 986. Serine 1023 is modified (phosphoserine). Residues 1025 to 1102 (EEVAKELKSK…HLNALSTDSA (78 aa)) are disordered. Residues 1026-1037 (EVAKELKSKSGE) are compositionally biased toward basic and acidic residues. Positions 1038 to 1051 (SKSSAMSSDGSLAE) are enriched in low complexity. A phosphoserine mark is found at serine 1044, serine 1045, and serine 1048. Over residues 1076–1101 (HSESALNNDSKTCNTNPHLNALSTDS) the composition is skewed to polar residues.

Belongs to the constitutive coactivator of PPAR-gamma family. In terms of assembly, interacts with PURA. Interacts with SRC family protein kinases YES1, SRC and FYN. Upon tyrosine phosphorylation, interacts with PIK3R1. Interacts with IGF2BP1/IMP-1 in an RNA-dependent manner. Post-translationally, arg-982 is dimethylated, probably to asymmetric dimethylarginine. In terms of processing, phosphorylated on tyrosine by SRC family protein kinases upon oxidative stress, for instance following UV irradiation. As to expression, widely expressed. In gastric mucosa, detected in the bottom region of the foveolar epithelium (at protein level).

Its subcellular location is the cytoplasm. The protein resides in the cell membrane. In terms of biological role, component of the oxidative stress-induced survival signaling. May regulate the activation of SRC family protein kinases. May act as a scaffolding protein enabling SRC family protein kinases to phosphorylate and activate PI3-kinase. Binds IGF2 RNA and promotes the production of IGF2 protein. In Homo sapiens (Human), this protein is Constitutive coactivator of PPAR-gamma-like protein 1 (FAM120A).